The primary structure comprises 313 residues: HPr kinase/phosphorylase (313 aa).

Residues His136 and Lys157 contribute to the active site. Gly151 to Ser158 provides a ligand contact to ATP. Residue Ser158 participates in Mg(2+) binding. Asp175 serves as the catalytic Proton acceptor; for phosphorylation activity. Proton donor; for dephosphorylation activity. Positions Leu199–Asn208 are important for the catalytic mechanism of both phosphorylation and dephosphorylation. Glu200 provides a ligand contact to Mg(2+). Arg241 is an active-site residue. The important for the catalytic mechanism of dephosphorylation stretch occupies residues Pro262–Arg267.

The protein belongs to the HPrK/P family. In terms of assembly, homohexamer. Requires Mg(2+) as cofactor.

It carries out the reaction [HPr protein]-L-serine + ATP = [HPr protein]-O-phospho-L-serine + ADP + H(+). It catalyses the reaction [HPr protein]-O-phospho-L-serine + phosphate + H(+) = [HPr protein]-L-serine + diphosphate. Its function is as follows. Catalyzes the ATP- as well as the pyrophosphate-dependent phosphorylation of a specific serine residue in HPr, a phosphocarrier protein of the phosphoenolpyruvate-dependent sugar phosphotransferase system (PTS). HprK/P also catalyzes the pyrophosphate-producing, inorganic phosphate-dependent dephosphorylation (phosphorolysis) of seryl-phosphorylated HPr (P-Ser-HPr). The two antagonistic activities of HprK/P are regulated by several intracellular metabolites, which change their concentration in response to the absence or presence of rapidly metabolisable carbon sources (glucose, fructose, etc.) in the growth medium. Therefore, by controlling the phosphorylation state of HPr, HPrK/P is a sensor enzyme that plays a major role in the regulation of carbon metabolism and sugar transport: it mediates carbon catabolite repression (CCR), and regulates PTS-catalyzed carbohydrate uptake and inducer exclusion. This is HPr kinase/phosphorylase from Staphylococcus saprophyticus subsp. saprophyticus (strain ATCC 15305 / DSM 20229 / NCIMB 8711 / NCTC 7292 / S-41).